Consider the following 334-residue polypeptide: Ornithine carbamoyltransferase (334 aa).

Carbamoyl phosphate-binding positions include 56 to 59 (STRT), Gln83, Arg107, and 134 to 137 (HPTQ). L-ornithine is bound by residues Asn168, Asp232, and 236–237 (SM). Residues 274–275 (CL) and Arg320 each bind carbamoyl phosphate.

This sequence belongs to the aspartate/ornithine carbamoyltransferase superfamily. OTCase family.

The protein localises to the cytoplasm. It catalyses the reaction carbamoyl phosphate + L-ornithine = L-citrulline + phosphate + H(+). It participates in amino-acid biosynthesis; L-arginine biosynthesis; L-arginine from L-ornithine and carbamoyl phosphate: step 1/3. Its function is as follows. Reversibly catalyzes the transfer of the carbamoyl group from carbamoyl phosphate (CP) to the N(epsilon) atom of ornithine (ORN) to produce L-citrulline. This Escherichia coli O157:H7 protein is Ornithine carbamoyltransferase.